The following is an 821-amino-acid chain: DNA ligase (821 aa).

Residues 50–54 (DAEYD), 99–100 (SL), and glutamate 140 each bind NAD(+). Lysine 142 acts as the N6-AMP-lysine intermediate in catalysis. Residues arginine 163, glutamate 200, lysine 319, and lysine 343 each coordinate NAD(+). Cysteine 452, cysteine 455, cysteine 470, and cysteine 476 together coordinate Zn(2+). The 80-residue stretch at 742–821 (AAALPLEGKT…AGLQALLAGN (80 aa)) folds into the BRCT domain.

It belongs to the NAD-dependent DNA ligase family. LigA subfamily. Mg(2+) serves as cofactor. It depends on Mn(2+) as a cofactor.

It catalyses the reaction NAD(+) + (deoxyribonucleotide)n-3'-hydroxyl + 5'-phospho-(deoxyribonucleotide)m = (deoxyribonucleotide)n+m + AMP + beta-nicotinamide D-nucleotide.. DNA ligase that catalyzes the formation of phosphodiester linkages between 5'-phosphoryl and 3'-hydroxyl groups in double-stranded DNA using NAD as a coenzyme and as the energy source for the reaction. It is essential for DNA replication and repair of damaged DNA. The polypeptide is DNA ligase (Chromobacterium violaceum (strain ATCC 12472 / DSM 30191 / JCM 1249 / CCUG 213 / NBRC 12614 / NCIMB 9131 / NCTC 9757 / MK)).